We begin with the raw amino-acid sequence, 526 residues long: Na(+)/H(+) antiporter NhaB (526 aa).

Transmembrane regions (helical) follow at residues 13–33 (FLGQSPDWYKLAILVFLVVNP), 98–118 (LLLIFMVAGIYFMKQLLLFVF), 133–155 (LAFCFAAALLSAFLDALTVVAVV), 208–228 (LLMHAGVGTALGGVMTMVGEP), 244–264 (FFLRMAPVTLPVFACGLLVCL), 309–329 (ALIGIWLVVALAFHLAEVGLI), 355–375 (EALPFTALLTVFFTVVAVIIE), 395–415 (LALFYLFNGLLSSVSDNVFVG), 452–472 (VATPNGQAAFLFLLTSALAPL), and 481–501 (VWMALPYTVVLTLVGLLCVQF).

Belongs to the NhaB Na(+)/H(+) (TC 2.A.34) antiporter family.

It is found in the cell inner membrane. It catalyses the reaction 2 Na(+)(in) + 3 H(+)(out) = 2 Na(+)(out) + 3 H(+)(in). Na(+)/H(+) antiporter that extrudes sodium in exchange for external protons. This chain is Na(+)/H(+) antiporter NhaB, found in Serratia proteamaculans (strain 568).